The sequence spans 336 residues: tRNA N6-adenosine threonylcarbamoyltransferase (336 aa).

Fe cation contacts are provided by His-114 and His-118. Substrate contacts are provided by residues 136-140 (LVSGG), Asp-169, Gly-182, Asp-186, and Asn-275. Asp-301 serves as a coordination point for Fe cation.

This sequence belongs to the KAE1 / TsaD family. The cofactor is Fe(2+).

Its subcellular location is the cytoplasm. The catalysed reaction is L-threonylcarbamoyladenylate + adenosine(37) in tRNA = N(6)-L-threonylcarbamoyladenosine(37) in tRNA + AMP + H(+). Required for the formation of a threonylcarbamoyl group on adenosine at position 37 (t(6)A37) in tRNAs that read codons beginning with adenine. Is involved in the transfer of the threonylcarbamoyl moiety of threonylcarbamoyl-AMP (TC-AMP) to the N6 group of A37, together with TsaE and TsaB. TsaD likely plays a direct catalytic role in this reaction. This Streptococcus pneumoniae serotype 4 (strain ATCC BAA-334 / TIGR4) protein is tRNA N6-adenosine threonylcarbamoyltransferase.